The chain runs to 357 residues: Peptide chain release factor 1 (357 aa).

Q232 is modified (N5-methylglutamine).

It belongs to the prokaryotic/mitochondrial release factor family. Post-translationally, methylated by PrmC. Methylation increases the termination efficiency of RF1.

The protein localises to the cytoplasm. Functionally, peptide chain release factor 1 directs the termination of translation in response to the peptide chain termination codons UAG and UAA. The protein is Peptide chain release factor 1 of Nitratidesulfovibrio vulgaris (strain ATCC 29579 / DSM 644 / CCUG 34227 / NCIMB 8303 / VKM B-1760 / Hildenborough) (Desulfovibrio vulgaris).